The sequence spans 148 residues: 3-dehydroquinate dehydratase 2 (148 aa).

Tyrosine 24 functions as the Proton acceptor in the catalytic mechanism. 3 residues coordinate substrate: asparagine 75, histidine 81, and aspartate 88. The active-site Proton donor is histidine 101. Substrate contacts are provided by residues 102-103 and arginine 112; that span reads LS.

Belongs to the type-II 3-dehydroquinase family. Homododecamer.

It catalyses the reaction 3-dehydroquinate = 3-dehydroshikimate + H2O. It participates in metabolic intermediate biosynthesis; chorismate biosynthesis; chorismate from D-erythrose 4-phosphate and phosphoenolpyruvate: step 3/7. In terms of biological role, catalyzes a trans-dehydration via an enolate intermediate. The sequence is that of 3-dehydroquinate dehydratase 2 (aroQ2) from Pseudomonas aeruginosa (strain ATCC 15692 / DSM 22644 / CIP 104116 / JCM 14847 / LMG 12228 / 1C / PRS 101 / PAO1).